Here is a 284-residue protein sequence, read N- to C-terminus: Bifunctional protein FolD (284 aa).

Residues Gly165–Ser167, Ser190, and Ile231 contribute to the NADP(+) site.

Belongs to the tetrahydrofolate dehydrogenase/cyclohydrolase family. In terms of assembly, homodimer.

The catalysed reaction is (6R)-5,10-methylene-5,6,7,8-tetrahydrofolate + NADP(+) = (6R)-5,10-methenyltetrahydrofolate + NADPH. It carries out the reaction (6R)-5,10-methenyltetrahydrofolate + H2O = (6R)-10-formyltetrahydrofolate + H(+). It functions in the pathway one-carbon metabolism; tetrahydrofolate interconversion. Catalyzes the oxidation of 5,10-methylenetetrahydrofolate to 5,10-methenyltetrahydrofolate and then the hydrolysis of 5,10-methenyltetrahydrofolate to 10-formyltetrahydrofolate. This chain is Bifunctional protein FolD, found in Polynucleobacter necessarius subsp. necessarius (strain STIR1).